The sequence spans 530 residues: 4-alpha-glucanotransferase (530 aa).

Belongs to the disproportionating enzyme family.

The protein localises to the cytoplasm. The catalysed reaction is Transfers a segment of a (1-&gt;4)-alpha-D-glucan to a new position in an acceptor, which may be glucose or a (1-&gt;4)-alpha-D-glucan.. The protein is 4-alpha-glucanotransferase (malQ) of Chlamydia caviae (strain ATCC VR-813 / DSM 19441 / 03DC25 / GPIC) (Chlamydophila caviae).